Here is a 357-residue protein sequence, read N- to C-terminus: MGQRIPVTLGNIAPLSLRPFQPGRIALVCEGGGQRGIFTAGVLDEFMRAQFNPFDLYLGTSAGAQNLSAFICNQPGYARKVIMRYTTKREFFDPLRFVRGGNLIDLDWLVEATASQMPLQMDTAARLFDSGKSFYMCACRQDDYAPNYFLPTKQNWLDVIRASSAIPGFYRSGVSLEGINYLDGGISDAIPVKEAARQGAKTLVVIRTVPSQMYYTPQWFKRMERWLGDSSLQPLVNLVQHHETSYRDIQQFIEKPPGKLRIFEIYPPKPLHSIALGSRIPALREDYKLGRLCGRYFLATVGKLLTEKAPLTRHLVPVVTPESIVIPPAPVANDTLVAEVSDAPQANDPTFNNEDLA.

A PNPLA domain is found at 27-196 (LVCEGGGQRG…SDAIPVKEAA (170 aa)). The GXGXXG motif lies at 31–36 (GGGQRG). The short motif at 59–63 (GTSAG) is the GXSXG element. S61 functions as the Nucleophile in the catalytic mechanism. D183 acts as the Proton acceptor in catalysis. The short motif at 183-185 (DGG) is the DGA/G element.

Its function is as follows. Probable lipid hydrolase. This is an uncharacterized protein from Escherichia coli (strain K12).